The following is a 229-amino-acid chain: NAD(P)H-hydrate epimerase (229 aa).

The YjeF N-terminal domain maps to 10 to 217 (AINVDLELFN…ALQRKYELNL (208 aa)). Residue 60–64 (NNGGD) participates in (6S)-NADPHX binding. Positions 61 and 125 each coordinate K(+). (6S)-NADPHX is bound by residues 129-135 (GFSFKPP) and Asp-158. Ser-161 provides a ligand contact to K(+).

It belongs to the NnrE/AIBP family. It depends on K(+) as a cofactor.

It catalyses the reaction (6R)-NADHX = (6S)-NADHX. It carries out the reaction (6R)-NADPHX = (6S)-NADPHX. Functionally, catalyzes the epimerization of the S- and R-forms of NAD(P)HX, a damaged form of NAD(P)H that is a result of enzymatic or heat-dependent hydration. This is a prerequisite for the S-specific NAD(P)H-hydrate dehydratase to allow the repair of both epimers of NAD(P)HX. This is NAD(P)H-hydrate epimerase from Drosophila mojavensis (Fruit fly).